Reading from the N-terminus, the 180-residue chain is Adenine phosphoribosyltransferase (180 aa).

Belongs to the purine/pyrimidine phosphoribosyltransferase family. Homodimer.

Its subcellular location is the cytoplasm. The enzyme catalyses AMP + diphosphate = 5-phospho-alpha-D-ribose 1-diphosphate + adenine. It participates in purine metabolism; AMP biosynthesis via salvage pathway; AMP from adenine: step 1/1. Functionally, catalyzes a salvage reaction resulting in the formation of AMP, that is energically less costly than de novo synthesis. This is Adenine phosphoribosyltransferase from Mycolicibacterium smegmatis (strain ATCC 700084 / mc(2)155) (Mycobacterium smegmatis).